Here is a 325-residue protein sequence, read N- to C-terminus: Beta-ketoacyl-[acyl-carrier-protein] synthase III (325 aa).

Active-site residues include C116 and H252. The segment at 253 to 257 is ACP-binding; the sequence is QANLR. N282 is an active-site residue.

Belongs to the thiolase-like superfamily. FabH family. As to quaternary structure, homodimer.

It localises to the cytoplasm. It carries out the reaction butanoyl-CoA + malonyl-[ACP] + H(+) = 3-oxohexanoyl-[ACP] + CO2 + CoA. It catalyses the reaction hexanoyl-CoA + malonyl-[ACP] + H(+) = 3-oxooctanoyl-[ACP] + CO2 + CoA. The enzyme catalyses octanoyl-CoA + malonyl-[ACP] + H(+) = 3-oxodecanoyl-[ACP] + CO2 + CoA. The catalysed reaction is decanoyl-CoA + malonyl-[ACP] + H(+) = 3-oxododecanoyl-[ACP] + CO2 + CoA. It carries out the reaction 2-methylpropanoyl-CoA + malonyl-[ACP] + H(+) = 4-methyl-3-oxopentanoyl-[ACP] + CO2 + CoA. It catalyses the reaction 3-methylbutanoyl-CoA + malonyl-[ACP] + H(+) = 5-methyl-3-oxohexanoyl-[ACP] + CO2 + CoA. The enzyme catalyses malonyl-[ACP] + acetyl-CoA + H(+) = 3-oxobutanoyl-[ACP] + CO2 + CoA. It participates in lipid metabolism; fatty acid biosynthesis. Functionally, catalyzes the condensation reaction of fatty acid synthesis by the addition to an acyl acceptor of two carbons from malonyl-ACP. Catalyzes the first condensation reaction which initiates fatty acid synthesis and may therefore play a role in governing the total rate of fatty acid production. Possesses both acetoacetyl-ACP synthase and acetyl transacylase activities. Can use a wide range of acyl-CoAs as the primer substrate in vitro, with a slight preference for short, medium-straight chain acyl-CoAs. Can also use branched-chain acyl-CoAs and acetyl-CoA. The sequence is that of Beta-ketoacyl-[acyl-carrier-protein] synthase III from Xanthomonas campestris pv. campestris (strain 8004).